The chain runs to 262 residues: NAC domain-containing protein 71 (262 aa).

Positions 6–160 (LPPGFRFHPT…AFALCRVVKK (155 aa)) constitute an NAC domain. A DNA-binding region spans residues 107 to 166 (AGYRKTLVFYEGRAPLGDRTNWFMHEYRLCDIDDHSQKSPNFKGAFALCRVVKKNELKKN).

The protein resides in the nucleus. In terms of biological role, transcription factor involved in tissue reunion of wounded inflorescence stems. Required for the division of pith cells in the reunion process, which is dependent on polar-transported auxin and the wound-inducible hormones ethylene and jasmonate. Binds to the promoters of XTH19 and XTH20 to induce their expression via auxin signaling. XTH19 and XTH20 are involved in cell proliferation in the tissue reunion process of incised stems. Involved in hypocotyl graft union formation. Required for the auxin- mediated promotion of vascular tissue proliferation during hypocotyl graft attachment. This chain is NAC domain-containing protein 71, found in Arabidopsis thaliana (Mouse-ear cress).